Reading from the N-terminus, the 122-residue chain is Large ribosomal subunit protein uL14 (122 aa).

The protein belongs to the universal ribosomal protein uL14 family. Part of the 50S ribosomal subunit. Forms a cluster with proteins L3 and L19. In the 70S ribosome, L14 and L19 interact and together make contacts with the 16S rRNA in bridges B5 and B8.

Binds to 23S rRNA. Forms part of two intersubunit bridges in the 70S ribosome. The sequence is that of Large ribosomal subunit protein uL14 from Gloeothece citriformis (strain PCC 7424) (Cyanothece sp. (strain PCC 7424)).